The following is a 432-amino-acid chain: NADH-quinone oxidoreductase subunit D (432 aa).

It belongs to the complex I 49 kDa subunit family. In terms of assembly, NDH-1 is composed of 14 different subunits. Subunits NuoB, C, D, E, F, and G constitute the peripheral sector of the complex.

The protein localises to the cell membrane. It carries out the reaction a quinone + NADH + 5 H(+)(in) = a quinol + NAD(+) + 4 H(+)(out). Functionally, NDH-1 shuttles electrons from NADH, via FMN and iron-sulfur (Fe-S) centers, to quinones in the respiratory chain. The immediate electron acceptor for the enzyme in this species is believed to be a menaquinone. Couples the redox reaction to proton translocation (for every two electrons transferred, four hydrogen ions are translocated across the cytoplasmic membrane), and thus conserves the redox energy in a proton gradient. This is NADH-quinone oxidoreductase subunit D from Mycobacterium marinum (strain ATCC BAA-535 / M).